Here is a 399-residue protein sequence, read N- to C-terminus: Vitamin K-dependent protein Z (399 aa).

The N-terminal stretch at 1–22 (MAGCILLLRGFILTLILHQVEL) is a signal peptide. Residues 23–40 (SVFLPAPKANNVLRRWRR) constitute a propeptide that is removed on maturation. The region spanning 41 to 86 (GSSYFLEEIFQGNLEKECYEEVCNYEEAREVFENDVITDEFWRQYG) is the Gla domain. Residues Glu-47, Glu-48, Glu-55, Glu-57, Glu-60, Glu-61, Glu-66, Glu-67, Glu-70, Glu-73, and Glu-80 each carry the 4-carboxyglutamate modification. A disulfide bridge links Cys-58 with Cys-63. EGF-like domains lie at 87–123 (GGSPCVSQPCLNNGTCEDHIRSYSCTCSPGYEGKTCA) and 125–166 (AKNE…KSCG). 7 disulfides stabilise this stretch: Cys-91/Cys-102, Cys-96/Cys-111, Cys-113/Cys-122, Cys-129/Cys-141, Cys-137/Cys-150, Cys-152/Cys-165, and Cys-208/Cys-224. An N-linked (GlcNAc...) asparagine glycan is attached at Asn-99. Asp-104 carries the post-translational modification (3R)-3-hydroxyaspartate. The region spanning 172 to 399 (ACGALTSEHI…YSMWFKQIMK (228 aa)) is the Peptidase S1 domain. Residues Asn-230, Asn-305, and Asn-331 are each glycosylated (N-linked (GlcNAc...) asparagine). A disulfide bond links Cys-326 and Cys-340.

The protein belongs to the peptidase S1 family. In terms of processing, the iron and 2-oxoglutarate dependent 3-hydroxylation of aspartate and asparagine is (R) stereospecific within EGF domains. Plasma.

It is found in the secreted. Its function is as follows. Appears to assist hemostasis by binding thrombin and promoting its association with phospholipid vesicles. Inhibits activity of the coagulation protease factor Xa in the presence of SERPINA10, calcium and phospholipids. In Mus musculus (Mouse), this protein is Vitamin K-dependent protein Z (Proz).